Consider the following 383-residue polypeptide: UDP-N-acetylglucosamine 2-epimerase (383 aa).

It belongs to the UDP-N-acetylglucosamine 2-epimerase family.

It catalyses the reaction UDP-N-acetyl-alpha-D-glucosamine = UDP-N-acetyl-alpha-D-mannosamine. It functions in the pathway capsule biogenesis; capsule polysaccharide biosynthesis. In terms of biological role, non-hydrolyzing C2-epimerase involved in the biosynthesis of capsular polysaccharides. Catalyzes the C2 epimerization of UDP-N-acetylglucosamine (UDP-GlcNAc) to form UDP-N-acetylmannosamine (UDP-ManNAc). The chain is UDP-N-acetylglucosamine 2-epimerase from Campylobacter jejuni.